The sequence spans 1037 residues: Glycine dehydrogenase (decarboxylating) A, mitochondrial (1037 aa).

A mitochondrion-targeting transit peptide spans Met1–Thr66. At Lys773 the chain carries N6-(pyridoxal phosphate)lysine.

It belongs to the GcvP family. Homodimer. The glycine cleavage system is composed of four proteins: P, T, L and H. Pyridoxal 5'-phosphate serves as cofactor. As to expression, expressed in leaves, stems and roots.

It localises to the mitochondrion. The enzyme catalyses N(6)-[(R)-lipoyl]-L-lysyl-[glycine-cleavage complex H protein] + glycine + H(+) = N(6)-[(R)-S(8)-aminomethyldihydrolipoyl]-L-lysyl-[glycine-cleavage complex H protein] + CO2. In terms of biological role, the glycine cleavage system catalyzes the degradation of glycine. The P protein binds the alpha-amino group of glycine through its pyridoxal phosphate cofactor; CO(2) is released and the remaining methylamine moiety is then transferred to the lipoamide cofactor of the H protein. The polypeptide is Glycine dehydrogenase (decarboxylating) A, mitochondrial (GDCSPA) (Flaveria pringlei).